The sequence spans 365 residues: tRNA 2-selenouridine synthase (365 aa).

In terms of domain architecture, Rhodanese spans 15 to 138 (LVNDHPIMDA…MRQFLIETID (124 aa)). Catalysis depends on cysteine 98, which acts as the S-selanylcysteine intermediate.

Belongs to the SelU family. In terms of assembly, monomer.

The enzyme catalyses 5-methylaminomethyl-2-thiouridine(34) in tRNA + selenophosphate + (2E)-geranyl diphosphate + H2O + H(+) = 5-methylaminomethyl-2-selenouridine(34) in tRNA + (2E)-thiogeraniol + phosphate + diphosphate. It catalyses the reaction 5-methylaminomethyl-2-thiouridine(34) in tRNA + (2E)-geranyl diphosphate = 5-methylaminomethyl-S-(2E)-geranyl-thiouridine(34) in tRNA + diphosphate. It carries out the reaction 5-methylaminomethyl-S-(2E)-geranyl-thiouridine(34) in tRNA + selenophosphate + H(+) = 5-methylaminomethyl-2-(Se-phospho)selenouridine(34) in tRNA + (2E)-thiogeraniol. The catalysed reaction is 5-methylaminomethyl-2-(Se-phospho)selenouridine(34) in tRNA + H2O = 5-methylaminomethyl-2-selenouridine(34) in tRNA + phosphate. Functionally, involved in the post-transcriptional modification of the uridine at the wobble position (U34) of tRNA(Lys), tRNA(Glu) and tRNA(Gln). Catalyzes the conversion of 2-thiouridine (S2U-RNA) to 2-selenouridine (Se2U-RNA). Acts in a two-step process involving geranylation of 2-thiouridine (S2U) to S-geranyl-2-thiouridine (geS2U) and subsequent selenation of the latter derivative to 2-selenouridine (Se2U) in the tRNA chain. The sequence is that of tRNA 2-selenouridine synthase from Shewanella pealeana (strain ATCC 700345 / ANG-SQ1).